The following is a 338-amino-acid chain: RNA 3'-terminal phosphate cyclase (338 aa).

Residues Q103 and 283 to 287 (YLADQ) contribute to the ATP site. Catalysis depends on H308, which acts as the Tele-AMP-histidine intermediate.

Belongs to the RNA 3'-terminal cyclase family. Type 1 subfamily.

The protein localises to the cytoplasm. The enzyme catalyses a 3'-end 3'-phospho-ribonucleotide-RNA + ATP = a 3'-end 2',3'-cyclophospho-ribonucleotide-RNA + AMP + diphosphate. In terms of biological role, catalyzes the conversion of 3'-phosphate to a 2',3'-cyclic phosphodiester at the end of RNA. The mechanism of action of the enzyme occurs in 3 steps: (A) adenylation of the enzyme by ATP; (B) transfer of adenylate to an RNA-N3'P to produce RNA-N3'PP5'A; (C) and attack of the adjacent 2'-hydroxyl on the 3'-phosphorus in the diester linkage to produce the cyclic end product. The biological role of this enzyme is unknown but it is likely to function in some aspects of cellular RNA processing. The polypeptide is RNA 3'-terminal phosphate cyclase (Escherichia coli O7:K1 (strain IAI39 / ExPEC)).